Here is a 649-residue protein sequence, read N- to C-terminus: Echinoderm microtubule-associated protein-like 2 (649 aa).

The tract at residues 10–649 (KEVIFSVEDG…DTSVLQWRVV (640 aa)) is tandem atypical propeller in EMLs. Coiled-coil stretches lie at residues 13 to 58 (IFSV…LKLE) and 73 to 114 (YLLP…LAIH). WD repeat units lie at residues 56–93 (KLEWVYGYRGRDCRANLYLLPTGEIVYFVASVAVLYSV), 97–144 (RQRH…IWDS), 151–192 (HVLG…VWDW), 195–234 (ETKVVDVKCSNEAVLVATFHPTDPTVLITCGKSHIYFWTL), 241–280 (KRQGLFEKHEKPKYVLCVTFLEGGDVVTGDSGGNLYVWGK), 285–323 (ITQAVLGAHDGGVFGLCALRDGTLVSGGGRDRRVVLWGS), 369–406 (FSLLVQGHVEELWGLATHPSRAQFVTCGQDKLVHLWSS), 410–447 (QPLWSRIIEDPARSAGFHPSGSVLAVGTVTGRWLLLDT), 452–489 (LVAIHTDGNEQISVVSFSPDGAYLAVGSHDNLVYVYTV), 495–535 (KVSR…YWDP), 564–602 (FGIWSEGADGTDINAVARSHDGKLLASADDFGKVHLFSY), and 609–648 (ALSHKYGGHSSHVTNVAFLWDDSMALTTGGKDTSVLQWRV).

The protein belongs to the WD repeat EMAP family. As to quaternary structure, homotrimer; self-association is mediated by the N-terminal coiled coil. In terms of assembly, interacts with GRID2 and may also interact with GRID1. Interacts with EML3. Binds unpolymerized tubulins via its WD repeat region. Ubiquitous.

Its subcellular location is the cytoplasm. The protein resides in the cytoskeleton. It localises to the spindle. Functionally, tubulin binding protein that inhibits microtubule nucleation and growth, resulting in shorter microtubules. This chain is Echinoderm microtubule-associated protein-like 2 (EML2), found in Homo sapiens (Human).